We begin with the raw amino-acid sequence, 668 residues long: Fructose-1,6-bisphosphatase class 3 (668 aa).

This sequence belongs to the FBPase class 3 family. The cofactor is Mn(2+).

It catalyses the reaction beta-D-fructose 1,6-bisphosphate + H2O = beta-D-fructose 6-phosphate + phosphate. It participates in carbohydrate biosynthesis; gluconeogenesis. This chain is Fructose-1,6-bisphosphatase class 3, found in Clostridium botulinum (strain 657 / Type Ba4).